The primary structure comprises 72 residues: Translation initiation factor IF-1 (72 aa).

The 72-residue stretch at 1–72 folds into the S1-like domain; sequence MPKEEVLEFP…TKGRITYRFK (72 aa).

This sequence belongs to the IF-1 family. As to quaternary structure, component of the 30S ribosomal translation pre-initiation complex which assembles on the 30S ribosome in the order IF-2 and IF-3, IF-1 and N-formylmethionyl-tRNA(fMet); mRNA recruitment can occur at any time during PIC assembly.

The protein resides in the cytoplasm. Its function is as follows. One of the essential components for the initiation of protein synthesis. Stabilizes the binding of IF-2 and IF-3 on the 30S subunit to which N-formylmethionyl-tRNA(fMet) subsequently binds. Helps modulate mRNA selection, yielding the 30S pre-initiation complex (PIC). Upon addition of the 50S ribosomal subunit IF-1, IF-2 and IF-3 are released leaving the mature 70S translation initiation complex. The polypeptide is Translation initiation factor IF-1 (Chelativorans sp. (strain BNC1)).